Consider the following 121-residue polypeptide: Large ribosomal subunit protein bL20 (121 aa).

It belongs to the bacterial ribosomal protein bL20 family.

In terms of biological role, binds directly to 23S ribosomal RNA and is necessary for the in vitro assembly process of the 50S ribosomal subunit. It is not involved in the protein synthesizing functions of that subunit. This is Large ribosomal subunit protein bL20 from Wolbachia pipientis subsp. Culex pipiens (strain wPip).